A 296-amino-acid polypeptide reads, in one-letter code: Factor associated with metabolism and energy (296 aa).

The N-myristoyl glycine moiety is linked to residue glycine 2. 2 stretches are compositionally biased toward basic and acidic residues: residues 173–187 and 267–281; these read SLHGEARINKQSPRD and EQGKDEKKPRALVRT. Disordered regions lie at residues 173 to 204 and 256 to 281; these read SLHGEARINKQSPRDHKAKKTLQSTPRNDDHD and LLWDSSSSDSDEQGKDEKKPRALVRT.

It localises to the cell membrane. The protein resides in the cytoplasmic vesicle. May be involved in tuning the metabolism, energy expenditure, and excretion processes. The polypeptide is Factor associated with metabolism and energy (Homo sapiens (Human)).